The primary structure comprises 163 residues: Probable histone H2A.4 (163 aa).

2 disordered regions span residues 1–30 (MEVG…VSRS) and 134–163 (SAAA…AAAA). The span at 12–21 (GAGGRRGGGG) shows a compositional bias: gly residues. A compositionally biased stretch (basic residues) spans 147–163 (KSPKKATTKSPKKAAAA). 2 short sequence motifs (SPKK motif) span residues 148–151 (SPKK) and 156–159 (SPKK).

It belongs to the histone H2A family. As to quaternary structure, the nucleosome is a histone octamer containing two molecules each of H2A, H2B, H3 and H4 assembled in one H3-H4 heterotetramer and two H2A-H2B heterodimers. The octamer wraps approximately 147 bp of DNA.

Its subcellular location is the nucleus. It is found in the chromosome. Its function is as follows. Core component of nucleosome. Nucleosomes wrap and compact DNA into chromatin, limiting DNA accessibility to the cellular machineries which require DNA as a template. Histones thereby play a central role in transcription regulation, DNA repair, DNA replication and chromosomal stability. DNA accessibility is regulated via a complex set of post-translational modifications of histones, also called histone code, and nucleosome remodeling. This chain is Probable histone H2A.4, found in Oryza sativa subsp. indica (Rice).